An 815-amino-acid polypeptide reads, in one-letter code: cGMP-specific 3',5'-cyclic phosphodiesterase delta (815 aa).

The Cytoplasmic segment spans residues 1–56; it reads MNEYNNDNMEQEKEKKKEEQKYKNIIKKEYFIFPRLYDKNKEIEYNKLRIHNIKEY. Residues 57-77 traverse the membrane as a helical segment; that stretch reads ICIHLTISLFIILIECFVFSF. Over 78 to 86 the chain is Extracellular; that stretch reads NLNIKDTTY. A helical membrane pass occupies residues 87-107; that stretch reads VEICVVIFSILNCLMHIVVLI. Residues 108–120 lie on the Cytoplasmic side of the membrane; that stretch reads KMYFFTSESVYTK. A helical membrane pass occupies residues 121 to 141; sequence GVFIGYIVLNQVFQFLSLYFF. Topologically, residues 142–160 are extracellular; sequence TKRNEQSKNDIAHLKYYDN. The helical transmembrane segment at 161–181 threads the bilayer; that stretch reads SFNLYVHFFVDSVFILCLPAL. At 182 to 183 the chain is on the cytoplasmic side; the sequence is SF. Residues 184–204 form a helical membrane-spanning segment; the sequence is FLSVLFMMMFLCLNILLINMI. Over 205–210 the chain is Extracellular; sequence KFNKTN. Residue Asn207 is glycosylated (N-linked (GlcNAc...) asparagine). Residues 211 to 231 traverse the membrane as a helical segment; it reads YGSDIYHICLLSVVLLMFLIL. Residues 232 to 815 lie on the Cytoplasmic side of the membrane; it reads RYMMEERNRL…FKEEIKHGKL (584 aa). The 379-residue stretch at 384-762 folds into the PDEase domain; it reads YEVEVLKNIK…QTWRLIEKNI (379 aa). His459 acts as the Proton donor in catalysis. 459–463 is a 3',5'-cyclic GMP binding site; that stretch reads HNANH. A divalent metal cation contacts are provided by His463, His499, Asp500, and Asp616. 3',5'-cyclic GMP is bound by residues Asp500, Asp616, and Gln715.

This sequence belongs to the cyclic nucleotide phosphodiesterase family. Requires a divalent metal cation as cofactor.

The protein localises to the membrane. The catalysed reaction is 3',5'-cyclic GMP + H2O = GMP + H(+). Its pathway is purine metabolism; 3',5'-cyclic GMP degradation; GMP from 3',5'-cyclic GMP: step 1/1. Functionally, specifically hydrolyzes the second messenger cGMP, which is a key regulator of many important physiological processes. Probably by regulating cGMP levels, required for activation of gametogenesis. The chain is cGMP-specific 3',5'-cyclic phosphodiesterase delta from Plasmodium falciparum (isolate 3D7).